The following is a 447-amino-acid chain: NADP-specific glutamate dehydrogenase (447 aa).

Residues K92, Q113, and K116 each coordinate substrate. Catalysis depends on K128, which acts as the Proton donor. Substrate is bound at residue G167. T212 and N243 together coordinate NADP(+). Substrate is bound at residue S379.

It belongs to the Glu/Leu/Phe/Val dehydrogenases family. Homohexamer.

The catalysed reaction is L-glutamate + NADP(+) + H2O = 2-oxoglutarate + NH4(+) + NADPH + H(+). In terms of biological role, catalyzes the reversible oxidative deamination of glutamate to alpha-ketoglutarate and ammonia. This is NADP-specific glutamate dehydrogenase (gdh) from Corynebacterium glutamicum (strain ATCC 13032 / DSM 20300 / JCM 1318 / BCRC 11384 / CCUG 27702 / LMG 3730 / NBRC 12168 / NCIMB 10025 / NRRL B-2784 / 534).